Consider the following 235-residue polypeptide: Aspartate/glutamate leucyltransferase (235 aa).

This sequence belongs to the R-transferase family. Bpt subfamily.

It is found in the cytoplasm. The enzyme catalyses N-terminal L-glutamyl-[protein] + L-leucyl-tRNA(Leu) = N-terminal L-leucyl-L-glutamyl-[protein] + tRNA(Leu) + H(+). It catalyses the reaction N-terminal L-aspartyl-[protein] + L-leucyl-tRNA(Leu) = N-terminal L-leucyl-L-aspartyl-[protein] + tRNA(Leu) + H(+). Its function is as follows. Functions in the N-end rule pathway of protein degradation where it conjugates Leu from its aminoacyl-tRNA to the N-termini of proteins containing an N-terminal aspartate or glutamate. The polypeptide is Aspartate/glutamate leucyltransferase (Pseudomonas fluorescens (strain Pf0-1)).